We begin with the raw amino-acid sequence, 383 residues long: MKNKLPPFIEIYRALIATPSISATEEALDQSNADLITLLADWFKDLGFNVEVQPVPGTRNKFNMLASCGQGAGGLLLAGHTDTVPFDDGRWTRDPFTLTEHDGKLYGLGTADMKGFFAFILDALRDVDVTKLAKPLYILATADEETSMAGARYFAETTALRPDCAIIGEPTSLQPVRAHKGHISNAIRIQGQSGHSSDPARGVNAIELMHDAIGHILQLRDNLKERYHYDAFTVPYPTLNLGHIHGGDASNRICACCELHMDIRPLPGMTLNELNGLLNDALAPVSERWPGRLTVDELHPPIPGYECPPNHQLVEVVEKLLGAKTEVVNYCTEAPFIQTLCPTLVLGPGSINQAHQPDEYLETRFIKPTRELITQVIHHFCWH.

Histidine 80 serves as a coordination point for Zn(2+). Aspartate 82 is a catalytic residue. Aspartate 112 provides a ligand contact to Zn(2+). The active site involves glutamate 144. Positions 145, 169, and 355 each coordinate Zn(2+).

This sequence belongs to the peptidase M20A family. ArgE subfamily. As to quaternary structure, homodimer. The cofactor is Zn(2+). It depends on Co(2+) as a cofactor. Glutathione is required as a cofactor.

Its subcellular location is the cytoplasm. The catalysed reaction is N(2)-acetyl-L-ornithine + H2O = L-ornithine + acetate. Its pathway is amino-acid biosynthesis; L-arginine biosynthesis; L-ornithine from N(2)-acetyl-L-ornithine (linear): step 1/1. Functionally, catalyzes the hydrolysis of the amide bond of N(2)-acetylated L-amino acids. Cleaves the acetyl group from N-acetyl-L-ornithine to form L-ornithine, an intermediate in L-arginine biosynthesis pathway, and a branchpoint in the synthesis of polyamines. The sequence is that of Acetylornithine deacetylase from Escherichia coli O45:K1 (strain S88 / ExPEC).